A 338-amino-acid chain; its full sequence is MKDKLEALLDQALSELAQASTEEGVQELRVKYLGKKGELTSVMKGLGALTPEERPVIGQVVNTVKSKLEEAFEVRGGEIREVVKSARLSAERIDVTLPGRRRPLGSKHPITLVTEEITSIFGALGFAVAEGPEIELDFYNFEALNLPKDHPARDMQDTFYFGESVLLRTHTSPVQIRTMLKQPPPVRIIAPGTVYRCDSDATHSPMFHQVEGLMVDKGITFGDLKGILTLFISQLFGSDIGVRLRPSFFPFTEPSAEVDIACVICRGKGCRVCKETGWLEILGAGMVDPEVYRHVGYDSELYTGFAFGMGIERIAMLKYGIADMRLLFENDLRFLKQF.

E253 is a binding site for Mg(2+).

The protein belongs to the class-II aminoacyl-tRNA synthetase family. Phe-tRNA synthetase alpha subunit type 1 subfamily. In terms of assembly, tetramer of two alpha and two beta subunits. Requires Mg(2+) as cofactor.

The protein resides in the cytoplasm. It catalyses the reaction tRNA(Phe) + L-phenylalanine + ATP = L-phenylalanyl-tRNA(Phe) + AMP + diphosphate + H(+). This chain is Phenylalanine--tRNA ligase alpha subunit, found in Citrifermentans bemidjiense (strain ATCC BAA-1014 / DSM 16622 / JCM 12645 / Bem) (Geobacter bemidjiensis).